A 432-amino-acid polypeptide reads, in one-letter code: Glutamyl-tRNA reductase (432 aa).

Substrate contacts are provided by residues 49–52, Ser-109, 114–116, and Gln-120; these read TCNR and EGQ. Cys-50 serves as the catalytic Nucleophile. 189-194 is a binding site for NADP(+); the sequence is GAGKMS.

This sequence belongs to the glutamyl-tRNA reductase family. Homodimer.

Its subcellular location is the plastid. The protein resides in the cyanelle. It catalyses the reaction (S)-4-amino-5-oxopentanoate + tRNA(Glu) + NADP(+) = L-glutamyl-tRNA(Glu) + NADPH + H(+). It participates in porphyrin-containing compound metabolism; protoporphyrin-IX biosynthesis; 5-aminolevulinate from L-glutamyl-tRNA(Glu): step 1/2. The protein operates within porphyrin-containing compound metabolism; chlorophyll biosynthesis. Catalyzes the NADPH-dependent reduction of glutamyl-tRNA(Glu) to glutamate 1-semialdehyde (GSA). This chain is Glutamyl-tRNA reductase, found in Cyanophora paradoxa.